A 548-amino-acid chain; its full sequence is Putative ATP-dependent RNA helicase R290 (548 aa).

One can recognise a Helicase ATP-binding domain in the interval 38–206 (INKVINGEDV…CKVLQLKTNE (169 aa)). An ATP-binding site is contributed by 51-58 (LMTSAGKS). The short motif at 150–153 (DEAH) is the DEAH box element. The 146-residue stretch at 231–376 (DIVPIINKYP…KTQLALLEQM (146 aa)) folds into the Helicase C-terminal domain.

Belongs to the DEAD box helicase family. DEAH subfamily.

The enzyme catalyses ATP + H2O = ADP + phosphate + H(+). The polypeptide is Putative ATP-dependent RNA helicase R290 (Acanthamoeba polyphaga mimivirus (APMV)).